The following is a 366-amino-acid chain: Phospho-N-acetylmuramoyl-pentapeptide-transferase (366 aa).

The next 10 helical transmembrane spans lie at 27–47 (AAMF…IASL), 71–91 (TPTM…LLWA), 93–113 (LSNV…AIGF), 134–154 (LAIE…AAKI), 174–194 (ALLN…VSAG), 205–225 (GLAI…AYLA), 245–265 (LAVI…FNAP), 268–288 (AIFM…TVAV), 294–314 (IVMV…IIQV), and 343–363 (QVVI…LATL).

The protein belongs to the glycosyltransferase 4 family. MraY subfamily. Mg(2+) serves as cofactor.

Its subcellular location is the cell inner membrane. It catalyses the reaction UDP-N-acetyl-alpha-D-muramoyl-L-alanyl-gamma-D-glutamyl-meso-2,6-diaminopimeloyl-D-alanyl-D-alanine + di-trans,octa-cis-undecaprenyl phosphate = di-trans,octa-cis-undecaprenyl diphospho-N-acetyl-alpha-D-muramoyl-L-alanyl-D-glutamyl-meso-2,6-diaminopimeloyl-D-alanyl-D-alanine + UMP. The protein operates within cell wall biogenesis; peptidoglycan biosynthesis. Functionally, catalyzes the initial step of the lipid cycle reactions in the biosynthesis of the cell wall peptidoglycan: transfers peptidoglycan precursor phospho-MurNAc-pentapeptide from UDP-MurNAc-pentapeptide onto the lipid carrier undecaprenyl phosphate, yielding undecaprenyl-pyrophosphoryl-MurNAc-pentapeptide, known as lipid I. This Allorhizobium ampelinum (strain ATCC BAA-846 / DSM 112012 / S4) (Agrobacterium vitis (strain S4)) protein is Phospho-N-acetylmuramoyl-pentapeptide-transferase.